The chain runs to 164 residues: Rhomboid-related protein 1 (164 aa).

4 helical membrane-spanning segments follow: residues 10-30 (GFNA…HGVL), 32-52 (ISLL…ITDM), 56-76 (VVGG…NVVM), and 120-140 (PSFM…LTIL). The Nucleophile role is filled by serine 60. Residue histidine 125 is part of the active site.

The protein belongs to the peptidase S54 family.

It localises to the membrane. The enzyme catalyses Cleaves type-1 transmembrane domains using a catalytic dyad composed of serine and histidine that are contributed by different transmembrane domains.. May be involved in regulated intramembrane proteolysis and the subsequent release of functional polypeptides from their membrane anchors. The polypeptide is Rhomboid-related protein 1 (Rhbdl1) (Rattus norvegicus (Rat)).